The primary structure comprises 352 residues: NAD(P)H pyrophosphatase NUDT13, mitochondrial (352 aa).

The N-terminal 20 residues, 1-20 (MSLYCGIACRRKFFWCYRLL), are a transit peptide targeting the mitochondrion. The Nudix hydrolase domain occupies 196-323 (PQMAPVAITL…PYTQQQNGTF (128 aa)). The Nudix box signature appears at 216–240 (RQSSFPKGMYSALAGFCDIGESVEE).

Belongs to the Nudix hydrolase family. The cofactor is Mg(2+). Requires Mn(2+) as cofactor. In terms of tissue distribution, highly expressed in metastasis-suppressed chromosome 6 melanoma hybrids.

It localises to the mitochondrion. The catalysed reaction is NADH + H2O = reduced beta-nicotinamide D-ribonucleotide + AMP + 2 H(+). The enzyme catalyses NAD(+) + H2O = beta-nicotinamide D-ribonucleotide + AMP + 2 H(+). It catalyses the reaction NADPH + H2O = reduced beta-nicotinamide D-ribonucleotide + adenosine 2',5'-bisphosphate + 2 H(+). Its function is as follows. NAD(P)H pyrophosphatase that hydrolyzes NADH into NMNH and AMP, and NADPH into NMNH and 2',5'-ADP. Has a marked preference for the reduced pyridine nucleotides. Does not show activity toward NAD-capped RNAs; the NAD-cap is an atypical cap present at the 5'-end of some RNAs. The polypeptide is NAD(P)H pyrophosphatase NUDT13, mitochondrial (Homo sapiens (Human)).